The primary structure comprises 2460 residues: Reducing polyketide synthase BOA6 (2460 aa).

The Ketosynthase family 3 (KS3) domain maps to 5 to 438; sequence NEPIAVIGTG…GTNAHAILES (434 aa). Catalysis depends on for beta-ketoacyl synthase activity residues C178, H317, and H360. The malonyl-CoA:ACP transacylase (MAT) domain stretch occupies residues 549–864; sequence VFTGQGAQWP…PYTGVLSRGD (316 aa). An N-terminal hotdog fold region spans residues 938-1073; that stretch reads HELLGVRCAD…GRIKMTLGTP (136 aa). The interval 938 to 1244 is dehydratase (DH) domain; sequence HELLGVRCAD…QMQSFTAARP (307 aa). Positions 938 to 1245 constitute a PKS/mFAS DH domain; that stretch reads HELLGVRCAD…MQSFTAARPS (308 aa). The Proton acceptor; for dehydratase activity role is filled by H970. The segment at 1088 to 1245 is C-terminal hotdog fold; sequence LGPLNVDRFY…MQSFTAARPS (158 aa). D1145 (proton donor; for dehydratase activity) is an active-site residue. Residues 1399-1586 form a methyltransferase (MT) domain region; it reads NKFVTAAMKK…VNDFKDKSRY (188 aa). The segment at 2098-2266 is ketoreductase (KR) domain; it reads SYLLAGLTGD…KRGGVASVIH (169 aa). Residues 2378 to 2456 form the Carrier domain; the sequence is DEVLGVMQKC…DLCELACEEY (79 aa). O-(pantetheine 4'-phosphoryl)serine is present on S2416.

The protein operates within polyketide biosynthesis. In terms of biological role, reducing polyketide synthase; part of the gene cluster A that mediates the biosynthesis of botcinic acid and its botcinin derivatives, acetate-derived polyketides that contribute to virulence when combined with the sesquiterpene botrydial. Botcinic acid and its derivatives have been shown to induce chlorosis and necrosis during host plant infection, but also have antifungal activities. Two polyketide synthases, BOA6 and BOA9, are involved in the biosynthesis of botcinins. BOA6 mediates the formation of the per-methylated tetraketide core by condensation of four units of malonyl-CoA with one unit of acetyl-CoA, which would be methylated in activated methylene groups to yield a bicyclic acid intermediate that could then either be converted to botrylactone derivatives or lose the starter acetate unit through a retro-Claisen type C-C bond cleavage to yield botcinin derivatives. The second polyketide synthase, BOA9, is probably required for the biosynthesis of the tetraketide side chain of botcinins. The methyltransferase (MT) domain within BOA6 is probably responsible for the incorporation of four methyl groups. The trans-enoyl reductase BOA5 might take over the enoyl reductase function of BOA6 that misses an ER domain. The monooxygenases BOA2, BOA3 and BOA4 might be involved in further hydroxylations at C4, C5 and C8, whereas BOA7, close to BOA9, could potentially be involved in the hydroxylation at C4 in the side chain of botcinins. The polypeptide is Reducing polyketide synthase BOA6 (Botryotinia fuckeliana (strain B05.10) (Noble rot fungus)).